The sequence spans 32 residues: Dermaseptin-DA4 (32 aa).

In terms of tissue distribution, expressed by the skin glands.

Its subcellular location is the secreted. The protein localises to the target cell membrane. In terms of biological role, antimicrobial peptide with activity against Gram-negative bacteria, but not against Gram-positive bacteria. Active against E.coli (MIC=5 uM), and P.aeruginosa (MIC=40 uM). Acts by disrupting cell membranes. Is able to depolarize membranes of Gram-positive and Gram-negative bacteria. Also acts as a potent chemoattractant for human leukocytes and activates them mainly through a GPCR, possibly FPRL1 coupled to the ERK1/2 MAPK pathway. Is unstructured in water but become helical upon binding to anionic lipids. In contrast to most dermaseptins, is not structured in the presence of zwitterionic lipids. Does not show hemolytic activity. The polypeptide is Dermaseptin-DA4 (Agalychnis dacnicolor (Giant Mexican leaf frog)).